The following is a 158-amino-acid chain: GAF domain-containing protein A (158 aa).

In terms of domain architecture, GAF spans 32-158; sequence NQIANLANVT…LTQILKLLDN (127 aa).

The protein belongs to the free Met sulfoxide reductase family.

The chain is GAF domain-containing protein A (gafA) from Dictyostelium discoideum (Social amoeba).